A 557-amino-acid polypeptide reads, in one-letter code: Urocanate hydratase (557 aa).

The segment at 1 to 20 (MSNPRHNEREVRSPRGDELN) is disordered. Residues 52–53 (GG), Q130, 176–178 (GMG), E196, R201, 242–243 (NA), 263–267 (QTSAH), 273–274 (YL), and Y322 each bind NAD(+). Residue C410 is part of the active site. G492 is a binding site for NAD(+).

It belongs to the urocanase family. The cofactor is NAD(+).

Its subcellular location is the cytoplasm. The enzyme catalyses 4-imidazolone-5-propanoate = trans-urocanate + H2O. It functions in the pathway amino-acid degradation; L-histidine degradation into L-glutamate; N-formimidoyl-L-glutamate from L-histidine: step 2/3. Its function is as follows. Catalyzes the conversion of urocanate to 4-imidazolone-5-propionate. This chain is Urocanate hydratase, found in Brucella ovis (strain ATCC 25840 / 63/290 / NCTC 10512).